A 113-amino-acid polypeptide reads, in one-letter code: Putative anti-sigma factor antagonist TM_1081 (113 aa).

In terms of domain architecture, STAS spans methionine 1–valine 110. Position 55 is a phosphoserine (serine 55).

Belongs to the anti-sigma-factor antagonist family. Phosphorylated on a serine residue.

Its function is as follows. In the phosphorylated form it could act as an anti-anti-sigma factor that counteracts an anti-sigma factor and thus releases a sigma factor from inhibition. The sequence is that of Putative anti-sigma factor antagonist TM_1081 from Thermotoga maritima (strain ATCC 43589 / DSM 3109 / JCM 10099 / NBRC 100826 / MSB8).